Reading from the N-terminus, the 1199-residue chain is DNA-directed RNA polymerase subunit beta (1199 aa).

The tract at residues 1175 to 1199 (EEKKAHEAAAQATDGKSANSTDDKK) is disordered. The segment covering 1188-1199 (DGKSANSTDDKK) has biased composition (polar residues).

It belongs to the RNA polymerase beta chain family. In terms of assembly, the RNAP catalytic core consists of 2 alpha, 1 beta, 1 beta' and 1 omega subunit. When a sigma factor is associated with the core the holoenzyme is formed, which can initiate transcription.

It carries out the reaction RNA(n) + a ribonucleoside 5'-triphosphate = RNA(n+1) + diphosphate. DNA-dependent RNA polymerase catalyzes the transcription of DNA into RNA using the four ribonucleoside triphosphates as substrates. The polypeptide is DNA-directed RNA polymerase subunit beta (Lacticaseibacillus casei (strain BL23) (Lactobacillus casei)).